Here is a 472-residue protein sequence, read N- to C-terminus: Glutamate synthase [NADPH] small chain (472 aa).

Residues 38 to 69 enclose the 4Fe-4S ferredoxin-type domain; it reads GQAKAQADRCLSCGNPYCEWKCPVHNYIPNWL. [4Fe-4S] cluster is bound by residues cysteine 47, cysteine 50, cysteine 55, and cysteine 59.

Aggregate of 4 catalytic active heterodimers, consisting of a large and a small subunit. It depends on [4Fe-4S] cluster as a cofactor.

It catalyses the reaction 2 L-glutamate + NADP(+) = L-glutamine + 2-oxoglutarate + NADPH + H(+). The protein operates within amino-acid biosynthesis; L-glutamate biosynthesis via GLT pathway; L-glutamate from 2-oxoglutarate and L-glutamine (NADP(+) route): step 1/1. It participates in energy metabolism; nitrogen metabolism. Functionally, catalyzes the conversion of L-glutamine and 2-oxoglutarate into two molecules of L-glutamate. The sequence is that of Glutamate synthase [NADPH] small chain (gltD) from Escherichia coli (strain K12).